We begin with the raw amino-acid sequence, 87 residues long: Large ribosomal subunit protein eL33 (87 aa).

The protein belongs to the eukaryotic ribosomal protein eL33 family.

This is Large ribosomal subunit protein eL33 from Pyrococcus horikoshii (strain ATCC 700860 / DSM 12428 / JCM 9974 / NBRC 100139 / OT-3).